Here is a 582-residue protein sequence, read N- to C-terminus: Mitogen-activated protein kinase 17 (582 aa).

Residues 22–61 (SSSFHLTTTGDDTVKDLHDPRREDAEGDGWEEVHEGPESD) form a disordered region. Residues 33–45 (DTVKDLHDPRRED) show a composition bias toward basic and acidic residues. One can recognise a Protein kinase domain in the interval 105 to 396 (YKVSEVIGKG…AEEALTDPYF (292 aa)). ATP-binding positions include 111–119 (IGKGSYGVV) and K134. The active-site Proton acceptor is D231. T267 is modified (phosphothreonine). The short motif at 267 to 269 (TDY) is the TXY element. Position 269 is a phosphotyrosine (Y269). 2 disordered regions span residues 474–502 (EGVS…GNKH) and 542–582 (ISAS…QLKT). Residues 482 to 491 (SSPQLRQNAS) show a composition bias toward polar residues. Residues 493–502 (PRERAIGNKH) are compositionally biased toward basic and acidic residues. The span at 557–572 (DQEDSLTESMDETADE) shows a compositional bias: acidic residues.

The protein belongs to the protein kinase superfamily. CMGC Ser/Thr protein kinase family. MAP kinase subfamily. Post-translationally, dually phosphorylated on Thr-267 and Tyr-269, which activates the enzyme.

It catalyses the reaction L-seryl-[protein] + ATP = O-phospho-L-seryl-[protein] + ADP + H(+). The catalysed reaction is L-threonyl-[protein] + ATP = O-phospho-L-threonyl-[protein] + ADP + H(+). Its activity is regulated as follows. Activated by threonine and tyrosine phosphorylation. The chain is Mitogen-activated protein kinase 17 (MPK17) from Oryza sativa subsp. japonica (Rice).